The following is a 36-amino-acid chain: uncharacterized protein (36 aa).

This is an uncharacterized protein from Spiroplasma melliferum (SpV1).